The following is a 572-amino-acid chain: Phospholipase B-like protein B (572 aa).

The N-terminal stretch at 1-28 is a signal peptide; it reads MNKLKSNFILNIVILFTILIFNINFINC. Residues Asn73, Asn138, Asn219, Asn427, Asn544, and Asn564 are each glycosylated (N-linked (GlcNAc...) asparagine).

It belongs to the phospholipase B-like family.

The protein resides in the secreted. In terms of biological role, probable phospholipase. This is Phospholipase B-like protein B (plbB) from Dictyostelium discoideum (Social amoeba).